The sequence spans 209 residues: Protein bli-3 (209 aa).

A compositionally biased stretch (polar residues) spans 1-11; that stretch reads MSGQGFSNADT. The interval 1-24 is disordered; sequence MSGQGFSNADTGNKPADPYKQANL.

The chain is Protein bli-3 (bli-3) from Neurospora crassa (strain ATCC 24698 / 74-OR23-1A / CBS 708.71 / DSM 1257 / FGSC 987).